Reading from the N-terminus, the 666-residue chain is Endogenous retrovirus group K member 19 Gag polyprotein (666 aa).

A lipid anchor (N-myristoyl glycine) is attached at G2. Disordered regions lie at residues 170 to 189 (LVGP…AGQV) and 223 to 264 (PLES…GSEL). A compositionally biased stretch (pro residues) spans 232 to 247 (GMPPAPQGRAPYPQPP). 2 CCHC-type zinc fingers span residues 544 to 561 (GKCY…NCPV) and 580 to 597 (DLCP…QCRS). The segment at 598 to 640 (KFDKNGQPLSGNEQRGQPQAPQQTGAFPIQPFVPHGFQGQQPP) is disordered. A compositionally biased stretch (polar residues) spans 604–622 (QPLSGNEQRGQPQAPQQTG).

It belongs to the beta type-B retroviral Gag protein family. HERV class-II K(HML-2) gag subfamily. In terms of processing, myristoylation is essential for retroviral assembly. Alteration of the glycine residue leads to a block in the budding of particles and an accumulation of Gag inside the cell. Post-translationally, specific enzymatic cleavages may yield mature proteins.

It is found in the cell membrane. The products of the Gag polyproteins of infectious retroviruses perform highly complex orchestrated tasks during the assembly, budding, maturation, and infection stages of the viral replication cycle. During viral assembly, the proteins form membrane associations and self-associations that ultimately result in budding of an immature virion from the infected cell. Gag precursors also function during viral assembly to selectively bind and package two plus strands of genomic RNA. Endogenous Gag proteins may have kept, lost or modified their original function during evolution. The polypeptide is Endogenous retrovirus group K member 19 Gag polyprotein (ERVK-19) (Homo sapiens (Human)).